A 435-amino-acid chain; its full sequence is ATP-dependent protease ATPase subunit HslU (435 aa).

Residues I18, G60 to E65, D248, E313, and R385 each bind ATP.

This sequence belongs to the ClpX chaperone family. HslU subfamily. A double ring-shaped homohexamer of HslV is capped on each side by a ring-shaped HslU homohexamer. The assembly of the HslU/HslV complex is dependent on binding of ATP.

Its subcellular location is the cytoplasm. ATPase subunit of a proteasome-like degradation complex; this subunit has chaperone activity. The binding of ATP and its subsequent hydrolysis by HslU are essential for unfolding of protein substrates subsequently hydrolyzed by HslV. HslU recognizes the N-terminal part of its protein substrates and unfolds these before they are guided to HslV for hydrolysis. The polypeptide is ATP-dependent protease ATPase subunit HslU (Sinorhizobium medicae (strain WSM419) (Ensifer medicae)).